The chain runs to 627 residues: UvrABC system protein C (627 aa).

The GIY-YIG domain occupies 22-100 (NNPGVYRMFN…IKRLRPRFNV (79 aa)). The UVR domain occupies 210–245 (QSVKDHLAAAMQAASADLDFEHAAVYRDRLAALSHV).

The protein belongs to the UvrC family. In terms of assembly, interacts with UvrB in an incision complex.

It localises to the cytoplasm. Its function is as follows. The UvrABC repair system catalyzes the recognition and processing of DNA lesions. UvrC both incises the 5' and 3' sides of the lesion. The N-terminal half is responsible for the 3' incision and the C-terminal half is responsible for the 5' incision. The chain is UvrABC system protein C from Brucella abortus biovar 1 (strain 9-941).